Reading from the N-terminus, the 327-residue chain is MESFAGKELQHSGAVHAYQLDGKGGITPIGEQDVVNSEKPCWLHLDSTVPASARWLNKTLVVPDSVRTALAGESVRPRVTRLGEGTLITLRSINLNANARPDQLVAVRVFITDKLIISTRRRKILAIDEILTDLKEGNGPTDSGNWLVSIAEALTDHTSEFIDDLHEKIIDLEDDLLEQKIPPRGELALIRKQLIVLRRYMTPQRDVFSRISGEKLPWMQDDDRRRMQEIADRLGRGLEDLDASVARTTVLSDEITALMTEAMNRRTYTMSLLAMVFLPTTFLTGLFGVNLGGIPGGDAPFGFFTFCLMLVILVGGVAWWLKRSKWL.

Topologically, residues 1–271 are cytoplasmic; that stretch reads MESFAGKELQ…AMNRRTYTMS (271 aa). Residues 272–292 traverse the membrane as a helical segment; that stretch reads LLAMVFLPTTFLTGLFGVNLG. The Periplasmic segment spans residues 293–300; that stretch reads GIPGGDAP. A helical membrane pass occupies residues 301-321; the sequence is FGFFTFCLMLVILVGGVAWWL. Over 322-327 the chain is Cytoplasmic; it reads KRSKWL.

It belongs to the CorA metal ion transporter (MIT) (TC 1.A.35) family.

Its subcellular location is the cell inner membrane. The catalysed reaction is Zn(2+)(out) + H(+)(out) = Zn(2+)(in) + H(+)(in). Zinc transporter. Acts as a Zn(2+):proton symporter, which likely mediates zinc ion uptake. This Pectobacterium atrosepticum (strain SCRI 1043 / ATCC BAA-672) (Erwinia carotovora subsp. atroseptica) protein is Zinc transport protein ZntB.